The following is a 618-amino-acid chain: Chaperone protein HtpG (618 aa).

The a; substrate-binding stretch occupies residues Met1–Arg340. A b region spans residues Glu341 to Asn545. The tract at residues Leu546–Leu618 is c.

This sequence belongs to the heat shock protein 90 family. In terms of assembly, homodimer.

It localises to the cytoplasm. Functionally, molecular chaperone. Has ATPase activity. This chain is Chaperone protein HtpG, found in Helicobacter hepaticus (strain ATCC 51449 / 3B1).